Consider the following 156-residue polypeptide: Ribosomal RNA large subunit methyltransferase H (156 aa).

Residues L73, G104, and 123–128 (LSALTL) contribute to the S-adenosyl-L-methionine site.

It belongs to the RNA methyltransferase RlmH family. In terms of assembly, homodimer.

It localises to the cytoplasm. It carries out the reaction pseudouridine(1915) in 23S rRNA + S-adenosyl-L-methionine = N(3)-methylpseudouridine(1915) in 23S rRNA + S-adenosyl-L-homocysteine + H(+). Specifically methylates the pseudouridine at position 1915 (m3Psi1915) in 23S rRNA. The sequence is that of Ribosomal RNA large subunit methyltransferase H from Erwinia tasmaniensis (strain DSM 17950 / CFBP 7177 / CIP 109463 / NCPPB 4357 / Et1/99).